The sequence spans 214 residues: Glycine-rich protein 2 (214 aa).

The CSD domain occupies 8-75 (RAKGTVKWFS…RTKAVDVTGP (68 aa)). The tract at residues 54 to 91 (TVEFEVESGGDGRTKAVDVTGPDGAAVQGGRGGGGGGG) is disordered. Over residues 80–91 (VQGGRGGGGGGG) the composition is skewed to gly residues. 2 consecutive CCHC-type zinc fingers follow at residues 157–174 (SGCF…DCSQ) and 194–211 (GGCY…ECTS).

This chain is Glycine-rich protein 2 (GRP-2), found in Nicotiana sylvestris (Wood tobacco).